The primary structure comprises 241 residues: Pyridoxal phosphate phosphatase PHOSPHO2 (241 aa).

The Nucleophile role is filled by aspartate 8. 2 residues coordinate Mg(2+): aspartate 8 and aspartate 10. The active-site Proton donor is the aspartate 10. Aspartate 19 and aspartate 99 together coordinate substrate. Mg(2+) is bound at residue aspartate 179.

It belongs to the HAD-like hydrolase superfamily. PHOSPHO family. Requires Mg(2+) as cofactor.

The enzyme catalyses pyridoxal 5'-phosphate + H2O = pyridoxal + phosphate. Functionally, phosphatase that has high activity toward pyridoxal 5'-phosphate (PLP). Also active at much lower level toward pyrophosphate, phosphoethanolamine (PEA), phosphocholine (PCho), phospho-l-tyrosine, fructose-6-phosphate, p-nitrophenyl phosphate, and h-glycerophosphate. In Mus musculus (Mouse), this protein is Pyridoxal phosphate phosphatase PHOSPHO2 (Phospho2).